The chain runs to 337 residues: Glyceraldehyde-3-phosphate dehydrogenase 1, cytosolic (337 aa).

Residues 13–14 (RI), Asp35, and Arg82 contribute to the NAD(+) site. D-glyceraldehyde 3-phosphate-binding positions include 153 to 155 (SCT), Thr184, 213 to 214 (TG), and Arg236. Cys154 (nucleophile) is an active-site residue. Asn318 lines the NAD(+) pocket.

The protein belongs to the glyceraldehyde-3-phosphate dehydrogenase family. As to quaternary structure, homotetramer. Phosphorylated after gibberellin treatment.

Its subcellular location is the cytoplasm. The catalysed reaction is D-glyceraldehyde 3-phosphate + phosphate + NAD(+) = (2R)-3-phospho-glyceroyl phosphate + NADH + H(+). Its pathway is carbohydrate degradation; glycolysis; pyruvate from D-glyceraldehyde 3-phosphate: step 1/5. Its function is as follows. Key enzyme in glycolysis that catalyzes the first step of the pathway by converting D-glyceraldehyde 3-phosphate (G3P) into 3-phospho-D-glyceroyl phosphate. Essential for the maintenance of cellular ATP levels and carbohydrate metabolism. The sequence is that of Glyceraldehyde-3-phosphate dehydrogenase 1, cytosolic (GAPC1) from Oryza sativa subsp. japonica (Rice).